Here is a 451-residue protein sequence, read N- to C-terminus: Tubulin beta-4 chain (451 aa).

GTP contacts are provided by Gln11, Glu69, Ser138, Gly142, Thr143, Gly144, Asn204, and Asn226. A Mg(2+)-binding site is contributed by Glu69. The segment covering 417–427 has biased composition (polar residues); it reads DLVSEYQQYQD. Positions 417-451 are disordered; the sequence is DLVSEYQQYQDATAEEEGEYDEDDGGYGDEDDGMM. Over residues 429 to 451 the composition is skewed to acidic residues; the sequence is TAEEEGEYDEDDGGYGDEDDGMM.

It belongs to the tubulin family. In terms of assembly, dimer of alpha and beta chains. A typical microtubule is a hollow water-filled tube with an outer diameter of 25 nm and an inner diameter of 15 nM. Alpha-beta heterodimers associate head-to-tail to form protofilaments running lengthwise along the microtubule wall with the beta-tubulin subunit facing the microtubule plus end conferring a structural polarity. Microtubules usually have 13 protofilaments but different protofilament numbers can be found in some organisms and specialized cells. Mg(2+) serves as cofactor.

The protein resides in the cytoplasm. Its subcellular location is the cytoskeleton. Tubulin is the major constituent of microtubules, a cylinder consisting of laterally associated linear protofilaments composed of alpha- and beta-tubulin heterodimers. Microtubules grow by the addition of GTP-tubulin dimers to the microtubule end, where a stabilizing cap forms. Below the cap, tubulin dimers are in GDP-bound state, owing to GTPase activity of alpha-tubulin. The protein is Tubulin beta-4 chain (TUBB4) of Oomycete-like sp. (strain MacKay2000).